Consider the following 88-residue polypeptide: Phosphocarrier protein HPr (88 aa).

The 88-residue stretch at 1 to 88 folds into the HPr domain; that stretch reads MEQKSYVIID…DILSKEGLTK (88 aa). Residue His15 is the Pros-phosphohistidine intermediate of the active site. The residue at position 46 (Ser46) is a Phosphoserine; by HPrK/P.

This sequence belongs to the HPr family.

It is found in the cytoplasm. With respect to regulation, phosphorylation on Ser-46 inhibits the phosphoryl transfer from enzyme I to HPr. Its function is as follows. General (non sugar-specific) component of the phosphoenolpyruvate-dependent sugar phosphotransferase system (sugar PTS). This major carbohydrate active-transport system catalyzes the phosphorylation of incoming sugar substrates concomitantly with their translocation across the cell membrane. The phosphoryl group from phosphoenolpyruvate (PEP) is transferred to the phosphoryl carrier protein HPr by enzyme I. Phospho-HPr then transfers it to the PTS EIIA domain. This chain is Phosphocarrier protein HPr (ptsH), found in Staphylococcus xylosus.